The chain runs to 271 residues: Shikimate dehydrogenase-like protein HI_0607 (271 aa).

Lys67 serves as the catalytic Proton donor/acceptor. Asp103 is a binding site for substrate. NADP(+) is bound by residues 126 to 130 (GSGGM), Lys154, and Ser184.

Belongs to the shikimate dehydrogenase-like family. In terms of assembly, homodimer.

The catalysed reaction is shikimate + NADP(+) = 3-dehydroshikimate + NADPH + H(+). Functionally, in vitro, is able to catalyze the NADP(+)-dependent oxidation of shikimate to 3-dehydroshikimate. However, has much lower activity than classical shikimate dehydrogenases AroE, indicating that shikimate may not be the biological substrate. Cannot utilize NAD(+) instead of NADP(+). Is not able to catalyze the oxidation of quinate. This chain is Shikimate dehydrogenase-like protein HI_0607, found in Haemophilus influenzae (strain ATCC 51907 / DSM 11121 / KW20 / Rd).